We begin with the raw amino-acid sequence, 218 residues long: MFKLVQLLGDNAVRALRDIAASGTFVDGKISNPHSRVKNNLQLHDAAAYERSSKILLDAMIQNADFMEFSFPARIAPPLLTRYTPGMHYGLHPDAAYIPLPDGQLRTDVSCTIFLSDPADYDGGALHVQLGNADLRFKEAPGVAIVYPSHTLHEVEPVTRGERLVAITFIQSLIPDVQQRNLMHELNEIAALEGGKMEPANYTRLQAVQYQLLRMWRR.

Residues 74–172 (RIAPPLLTRY…RLVAITFIQS (99 aa)) enclose the Fe2OG dioxygenase domain. Fe cation contacts are provided by His92, Asp94, and His153. Arg163 lines the 2-oxoglutarate pocket.

Fe(2+) is required as a cofactor. The cofactor is L-ascorbate.

The chain is PKHD-type hydroxylase Sala_1910 from Sphingopyxis alaskensis (strain DSM 13593 / LMG 18877 / RB2256) (Sphingomonas alaskensis).